The following is a 534-amino-acid chain: Probable alanine aminotransferase, mitochondrial (534 aa).

Residues 1–18 (MFKRSLKVLLSNPPINRV) constitute a mitochondrion transit peptide. The residue at position 352 (Lys352) is an N6-(pyridoxal phosphate)lysine.

This sequence belongs to the class-I pyridoxal-phosphate-dependent aminotransferase family. Alanine aminotransferase subfamily. Homodimer. Requires pyridoxal 5'-phosphate as cofactor.

The protein resides in the mitochondrion matrix. It catalyses the reaction L-alanine + 2-oxoglutarate = pyruvate + L-glutamate. It participates in amino-acid degradation; L-alanine degradation via transaminase pathway; pyruvate from L-alanine: step 1/1. The chain is Probable alanine aminotransferase, mitochondrial (gpt) from Dictyostelium discoideum (Social amoeba).